Consider the following 474-residue polypeptide: uncharacterized protein (474 aa).

Residues 3–23 (LTLWLVLGAVGVGAVGTGVGF) form a helical membrane-spanning segment. Residues 171-296 (VSDGSSSKTR…KETKDRTKVD (126 aa)) form a disordered region. Residues 180–210 (RTPKKTKTSKKKPIKKKSSKSKSSKGSKKQK) are compositionally biased toward basic residues. Residues 231 to 253 (TRSQSKQQKGQEQATDQTDSEGV) show a composition bias toward polar residues. Over residues 257–266 (EGADNTDTEL) the composition is skewed to acidic residues. The segment covering 267–281 (VETTAETTEQEATTK) has biased composition (low complexity). Positions 282–296 (STKDTKETKDRTKVD) are enriched in basic and acidic residues.

Its subcellular location is the membrane. This is an uncharacterized protein from Mycoplasma pneumoniae (strain ATCC 29342 / M129 / Subtype 1) (Mycoplasmoides pneumoniae).